Reading from the N-terminus, the 124-residue chain is KETAAEKFQRQHMDTSSSLSNDSNYCNQMMVRRNMTQDRCKPVNTFVHESEADVKAVCSQKNVTCKNGQTNCYQSNSTMHITDCRETGSSKYPNCAYKTSQLQKHIIVACEGDPYVPVHYDASV.

Basic and acidic residues predominate over residues 1-13 (KETAAEKFQRQHM). Positions 1 to 21 (KETAAEKFQRQHMDTSSSLSN) are disordered. Positions 7 and 10 each coordinate substrate. The active-site Proton acceptor is His-12. Intrachain disulfides connect Cys-26–Cys-84, Cys-40–Cys-95, Cys-58–Cys-110, and Cys-65–Cys-72. The N-linked (GlcNAc...) asparagine glycan is linked to Asn-34. Substrate-binding positions include 41–45 (KPVNT), Lys-66, and Arg-85. Catalysis depends on His-119, which acts as the Proton donor.

The protein belongs to the pancreatic ribonuclease family. In terms of assembly, monomer. Interacts with and forms tight 1:1 complexes with RNH1. Dimerization of two such complexes may occur. Interaction with RNH1 inhibits this protein. In terms of tissue distribution, pancreas.

Its subcellular location is the secreted. It carries out the reaction an [RNA] containing cytidine + H2O = an [RNA]-3'-cytidine-3'-phosphate + a 5'-hydroxy-ribonucleotide-3'-[RNA].. It catalyses the reaction an [RNA] containing uridine + H2O = an [RNA]-3'-uridine-3'-phosphate + a 5'-hydroxy-ribonucleotide-3'-[RNA].. Its function is as follows. Endonuclease that catalyzes the cleavage of RNA on the 3' side of pyrimidine nucleotides. Acts on single-stranded and double-stranded RNA. The chain is Ribonuclease pancreatic (RNASE1) from Hippopotamus amphibius (Hippopotamus).